Here is a 120-residue protein sequence, read N- to C-terminus: uncharacterized protein (120 aa).

A disordered region spans residues S90–R120.

This is an uncharacterized protein from Homo sapiens (Human).